The sequence spans 432 residues: Glutamate-1-semialdehyde 2,1-aminomutase 2 (432 aa).

An N6-(pyridoxal phosphate)lysine modification is found at Lys-268.

It belongs to the class-III pyridoxal-phosphate-dependent aminotransferase family. HemL subfamily. Homodimer. Requires pyridoxal 5'-phosphate as cofactor.

Its subcellular location is the cytoplasm. The catalysed reaction is (S)-4-amino-5-oxopentanoate = 5-aminolevulinate. The protein operates within porphyrin-containing compound metabolism; protoporphyrin-IX biosynthesis; 5-aminolevulinate from L-glutamyl-tRNA(Glu): step 2/2. This is Glutamate-1-semialdehyde 2,1-aminomutase 2 from Listeria welshimeri serovar 6b (strain ATCC 35897 / DSM 20650 / CCUG 15529 / CIP 8149 / NCTC 11857 / SLCC 5334 / V8).